The sequence spans 264 residues: MNRDNTKTNKTVKQEFASFTFVICIALVIRILIMEPFTVPTGSMKATILENDYIFSTKYSYGYSNYSLSFFDFIPLFKGRVFAREPERGDIVVFRPPNDMSVRYIKRLIGLPGDKIQLIDDVIYINDKKIERTEVGTYIGEDGIKYLKFKETLPNGRTYFSYKLAPIFGIISNDRYSNTGVFYVPEGQYFFLGDNRDRSNDSRVNLGFVPFENFIGKAQFIWFSTKITWWDNDIGIINLILKLKPWIESVRLSRIFKNLYNVDE.

At 1–18 (MNRDNTKTNKTVKQEFAS) the chain is on the cytoplasmic side. The helical transmembrane segment at 19-39 (FTFVICIALVIRILIMEPFTV) threads the bilayer. The Periplasmic segment spans residues 40–264 (PTGSMKATIL…IFKNLYNVDE (225 aa)). Residues serine 43 and lysine 106 contribute to the active site.

This sequence belongs to the peptidase S26 family.

The protein resides in the cell inner membrane. The enzyme catalyses Cleavage of hydrophobic, N-terminal signal or leader sequences from secreted and periplasmic proteins.. Complements E.coli mutants temperature-sensitive for LepB function. This chain is Signal peptidase I (lepB), found in Rickettsia typhi (strain ATCC VR-144 / Wilmington).